The sequence spans 303 residues: Glutathione transport system permease protein GsiD (303 aa).

Helical transmembrane passes span Gln37–Ala57, Leu105–Leu125, Leu144–Ile164, Ala165–Gly185, Thr208–Met228, Ile230–Pro250, and Val266–Phe286. Positions Ala101 to Gly290 constitute an ABC transmembrane type-1 domain.

The protein belongs to the binding-protein-dependent transport system permease family. As to quaternary structure, the complex is composed of two ATP-binding proteins (GsiA), two transmembrane proteins (GsiC and GsiD) and a solute-binding protein (GsiB).

The protein resides in the cell inner membrane. Functionally, part of the ABC transporter complex GsiABCD involved in glutathione import. Probably responsible for the translocation of the substrate across the membrane. The protein is Glutathione transport system permease protein GsiD of Salmonella paratyphi A (strain ATCC 9150 / SARB42).